The sequence spans 135 residues: Cytochrome c2 (135 aa).

The signal sequence occupies residues 1-23 (MKKGFLAAGVFAAVAFASGAALA). The heme c site is built by Cys37, Cys40, His41, and Met114.

Belongs to the cytochrome c family. In terms of processing, binds 1 heme c group covalently per subunit.

Functionally, cytochrome c2 is found mainly in purple, non-sulfur, photosynthetic bacteria where it functions as the electron donor to the oxidized bacteriochlorophyll in the photophosphorylation pathway. However, it may also have a role in the respiratory chain and is found in some non-photosynthetic bacteria. This is Cytochrome c2 (cycA) from Rhodospirillum rubrum (strain ATCC 11170 / ATH 1.1.1 / DSM 467 / LMG 4362 / NCIMB 8255 / S1).